Consider the following 207-residue polypeptide: ATP synthase subunit b 2 (207 aa).

Low complexity predominate over residues Met-1 to Gly-31. Residues Met-1–Ser-41 form a disordered region. The helical transmembrane segment at Ala-48–Ser-70 threads the bilayer.

Belongs to the ATPase B chain family. As to quaternary structure, F-type ATPases have 2 components, F(1) - the catalytic core - and F(0) - the membrane proton channel. F(1) has five subunits: alpha(3), beta(3), gamma(1), delta(1), epsilon(1). F(0) has three main subunits: a(1), b(2) and c(10-14). The alpha and beta chains form an alternating ring which encloses part of the gamma chain. F(1) is attached to F(0) by a central stalk formed by the gamma and epsilon chains, while a peripheral stalk is formed by the delta and b chains.

Its subcellular location is the cell inner membrane. Its function is as follows. F(1)F(0) ATP synthase produces ATP from ADP in the presence of a proton or sodium gradient. F-type ATPases consist of two structural domains, F(1) containing the extramembraneous catalytic core and F(0) containing the membrane proton channel, linked together by a central stalk and a peripheral stalk. During catalysis, ATP synthesis in the catalytic domain of F(1) is coupled via a rotary mechanism of the central stalk subunits to proton translocation. In terms of biological role, component of the F(0) channel, it forms part of the peripheral stalk, linking F(1) to F(0). The sequence is that of ATP synthase subunit b 2 from Xanthobacter autotrophicus (strain ATCC BAA-1158 / Py2).